The following is a 736-amino-acid chain: Catalase-peroxidase (736 aa).

Positions 1-10 (MDAKTDDKGA) are enriched in basic and acidic residues. The disordered stretch occupies residues 1 to 26 (MDAKTDDKGAGKCPFSGGSHGHRNRD). Positions 96-218 (WHSAGTYRIT…LGAVQMGLIY (123 aa)) form a cross-link, tryptophyl-tyrosyl-methioninium (Trp-Tyr) (with M-244). Histidine 97 serves as the catalytic Proton acceptor. Residues 218–244 (YVNPEGPNGNPDPVAAAKDIRETFARM) constitute a cross-link (tryptophyl-tyrosyl-methioninium (Tyr-Met) (with W-96)). Histidine 259 lines the heme b pocket.

It belongs to the peroxidase family. Peroxidase/catalase subfamily. As to quaternary structure, homodimer or homotetramer. Heme b serves as cofactor. In terms of processing, formation of the three residue Trp-Tyr-Met cross-link is important for the catalase, but not the peroxidase activity of the enzyme.

The enzyme catalyses H2O2 + AH2 = A + 2 H2O. It carries out the reaction 2 H2O2 = O2 + 2 H2O. Bifunctional enzyme with both catalase and broad-spectrum peroxidase activity. The polypeptide is Catalase-peroxidase (Rhodopseudomonas palustris (strain ATCC BAA-98 / CGA009)).